A 212-amino-acid polypeptide reads, in one-letter code: Large ribosomal subunit protein uL3 (212 aa).

A disordered region spans residues 133 to 156; sequence SMTHGSKNHRLPGSTGAGTTPGRV.

This sequence belongs to the universal ribosomal protein uL3 family. As to quaternary structure, part of the 50S ribosomal subunit. Forms a cluster with proteins L14 and L19.

One of the primary rRNA binding proteins, it binds directly near the 3'-end of the 23S rRNA, where it nucleates assembly of the 50S subunit. This chain is Large ribosomal subunit protein uL3, found in Crocosphaera subtropica (strain ATCC 51142 / BH68) (Cyanothece sp. (strain ATCC 51142)).